Consider the following 265-residue polypeptide: 3-deoxy-manno-octulosonate cytidylyltransferase 2 (265 aa).

This sequence belongs to the KdsB family.

The protein localises to the cytoplasm. The enzyme catalyses 3-deoxy-alpha-D-manno-oct-2-ulosonate + CTP = CMP-3-deoxy-beta-D-manno-octulosonate + diphosphate. It functions in the pathway nucleotide-sugar biosynthesis; CMP-3-deoxy-D-manno-octulosonate biosynthesis; CMP-3-deoxy-D-manno-octulosonate from 3-deoxy-D-manno-octulosonate and CTP: step 1/1. Its pathway is bacterial outer membrane biogenesis; lipopolysaccharide biosynthesis. Activates KDO (a required 8-carbon sugar) for incorporation into bacterial lipopolysaccharide in Gram-negative bacteria. In Burkholderia lata (strain ATCC 17760 / DSM 23089 / LMG 22485 / NCIMB 9086 / R18194 / 383), this protein is 3-deoxy-manno-octulosonate cytidylyltransferase 2.